The chain runs to 445 residues: Arabinooligosaccharide-binding protein (445 aa).

The N-terminal stretch at 1-20 (MGKNILFFSFVGVMVLVLVA) is a signal peptide. The N-palmitoyl cysteine moiety is linked to residue cysteine 21. Cysteine 21 carries the S-diacylglycerol cysteine lipid modification.

The protein belongs to the bacterial solute-binding protein 1 family. As to quaternary structure, the complex is composed of two ATP-binding proteins (MsmX), two transmembrane proteins (AraP and AraQ) and a solute-binding protein (AraN).

The protein resides in the cell membrane. Functionally, part of the ABC transporter complex AraNPQ involved in the uptake of arabinooligosaccharides. AraN captures the substrate and delivers it to the two transmembrane components. This chain is Arabinooligosaccharide-binding protein (araN), found in Halalkalibacterium halodurans (strain ATCC BAA-125 / DSM 18197 / FERM 7344 / JCM 9153 / C-125) (Bacillus halodurans).